Consider the following 1034-residue polypeptide: FACT complex subunit spt-16 (1034 aa).

Composition is skewed to basic and acidic residues over residues 433–448 (EEQE…DQKK), 463–481 (TRNK…KELG), and 493–503 (SKQDGGTDEKK). Residues 433-511 (EEQENRETER…KKVKKSNVSY (79 aa)) are disordered. The stretch at 617–642 (LSTAFRQIKEMQKRFRTEEAEEREKD) forms a coiled coil. Acidic residues-rich tracts occupy residues 926–950 (AESE…EADA) and 959–983 (SDED…DSDE). The interval 926–1034 (AESEGEDAGD…KAGPSHKRRK (109 aa)) is disordered. Over residues 984–1020 (SEGKDWSDLEEEAAKADKRREVEDGGRDRDRDRDRKR) the composition is skewed to basic and acidic residues. A compositionally biased stretch (basic residues) spans 1021–1034 (PSSSKAGPSHKRRK).

It belongs to the peptidase M24 family. SPT16 subfamily. As to quaternary structure, component of the FACT complex, a stable heterodimer of spt-16 and hmg-3 or hmg-4.

Its subcellular location is the nucleus. It localises to the chromosome. Functionally, component of the FACT complex, a general chromatin factor that acts to reorganize nucleosomes. The FACT complex is involved in multiple processes that require DNA as a template such as mRNA elongation, DNA replication and DNA repair. During transcription elongation the FACT complex acts as a histone chaperone that both destabilizes and restores nucleosomal structure. It facilitates the passage of RNA polymerase II and transcription by promoting the dissociation of one histone H2A-H2B dimer from the nucleosome, then subsequently promotes the reestablishment of the nucleosome following the passage of RNA polymerase II. The polypeptide is FACT complex subunit spt-16 (spt-16) (Caenorhabditis briggsae).